Reading from the N-terminus, the 92-residue chain is Integration host factor subunit beta (92 aa).

Belongs to the bacterial histone-like protein family. As to quaternary structure, heterodimer of an alpha and a beta chain.

Functionally, this protein is one of the two subunits of integration host factor, a specific DNA-binding protein that functions in genetic recombination as well as in transcriptional and translational control. This is Integration host factor subunit beta from Bartonella tribocorum (strain CIP 105476 / IBS 506).